The chain runs to 400 residues: MASEKPIVVVTCTAPVNIAVVKYWGKRDEELILPINSSLSVTLHQDQLKTTTTAAISRDFTEDRIWLNGREEDMGHPRLQACLREIRRLARKRRSDGHEDPLPLSLSYKVHVASENNFPTAAGLASSAAGYACLAYTLARVYGVDSDLSEVARRGSGSACRSLYGGFVEWQMGERPDGKDSVACQVAPESHWPELRVLILVVSAERKPMGSTAGMQTSVETSALLKFRAEALVPPRMAEMTRCIRERNFQAFGQLTMKDSNQFHATCLDTFPPISYLSDTSRRIIQLVHRFNAHHGQTKVAYTFDAGPNAVVFTLDDTVAEFVAAVRHSFPPESNGDKFLKGLPVEPVLLSDELKAVLGMDPVPGSIRYIIATQVGPGPQVLDDPGAHLLGPDGLPKPAA.

Alanine 2 is modified (N-acetylalanine). Residues 23–26, arginine 78, 156–161, and threonine 212 each bind (R)-5-diphosphomevalonate; these read YWGK and SGSACR.

This sequence belongs to the diphosphomevalonate decarboxylase family. As to quaternary structure, homodimer.

It is found in the cytoplasm. The enzyme catalyses (R)-5-diphosphomevalonate + ATP = isopentenyl diphosphate + ADP + phosphate + CO2. Its pathway is steroid biosynthesis; cholesterol biosynthesis. In terms of biological role, catalyzes the ATP dependent decarboxylation of (R)-5-diphosphomevalonate to form isopentenyl diphosphate (IPP). Functions in the mevalonate (MVA) pathway leading to isopentenyl diphosphate (IPP), a key precursor for the biosynthesis of isoprenoids and sterol synthesis. The sequence is that of Diphosphomevalonate decarboxylase (MVD) from Bos taurus (Bovine).